The chain runs to 209 residues: Uracil phosphoribosyltransferase (209 aa).

5-phospho-alpha-D-ribose 1-diphosphate is bound by residues Arg79, Arg104, and 131–139 (DPMLATGGS). Uracil is bound by residues Ile194 and 199–201 (GDA). Residue Asp200 participates in 5-phospho-alpha-D-ribose 1-diphosphate binding.

Belongs to the UPRTase family. Mg(2+) is required as a cofactor.

It catalyses the reaction UMP + diphosphate = 5-phospho-alpha-D-ribose 1-diphosphate + uracil. The protein operates within pyrimidine metabolism; UMP biosynthesis via salvage pathway; UMP from uracil: step 1/1. Allosterically activated by GTP. In terms of biological role, catalyzes the conversion of uracil and 5-phospho-alpha-D-ribose 1-diphosphate (PRPP) to UMP and diphosphate. In Natranaerobius thermophilus (strain ATCC BAA-1301 / DSM 18059 / JW/NM-WN-LF), this protein is Uracil phosphoribosyltransferase.